The sequence spans 714 residues: Zinc finger matrin-type protein 1 (714 aa).

The Matrin-type 1 zinc-finger motif lies at 89 to 119 (NFCKPCGVVLQHESERISHFESEIHAQNVKF). The disordered stretch occupies residues 172–214 (HYVGKSHSPTQNQSLEEHDQVSPSTCSPKMDEPNTTPAPPPFL). The Matrin-type 2 zinc-finger motif lies at 230 to 254 (YVCHICSITFTSLHMFRSHMQGTEH). Over residues 417 to 434 (RERVDSEHRQRPCEERFS) the composition is skewed to basic and acidic residues. Disordered stretches follow at residues 417-469 (RERV…NDDF) and 571-714 (MPAS…ILGF). 2 stretches are compositionally biased toward polar residues: residues 437–446 (APQTYQQEYS) and 575–588 (LSLS…SSYN). Basic residues predominate over residues 609–619 (SHRRRRQKRKR). Composition is skewed to basic and acidic residues over residues 620 to 632 (HLEE…EKEQ) and 640 to 662 (SYQD…EDKA). A compositionally biased stretch (basic residues) spans 669 to 678 (TKHRRKKRKH).

The protein resides in the nucleus. This is Zinc finger matrin-type protein 1 (Zmat1) from Mus musculus (Mouse).